A 314-amino-acid chain; its full sequence is Methionyl-tRNA formyltransferase (314 aa).

109-112 is a binding site for (6S)-5,6,7,8-tetrahydrofolate; it reads SVLP.

It belongs to the Fmt family.

It carries out the reaction L-methionyl-tRNA(fMet) + (6R)-10-formyltetrahydrofolate = N-formyl-L-methionyl-tRNA(fMet) + (6S)-5,6,7,8-tetrahydrofolate + H(+). Functionally, attaches a formyl group to the free amino group of methionyl-tRNA(fMet). The formyl group appears to play a dual role in the initiator identity of N-formylmethionyl-tRNA by promoting its recognition by IF2 and preventing the misappropriation of this tRNA by the elongation apparatus. The sequence is that of Methionyl-tRNA formyltransferase from Dictyoglomus turgidum (strain DSM 6724 / Z-1310).